The chain runs to 71 residues: Long neurotoxin 1 (71 aa).

Disulfide bonds link Cys-3–Cys-20, Cys-14–Cys-41, Cys-26–Cys-30, Cys-45–Cys-56, and Cys-57–Cys-62.

This sequence belongs to the three-finger toxin family. Long-chain subfamily. Type II alpha-neurotoxin sub-subfamily. Expressed by the venom gland.

It is found in the secreted. In terms of biological role, binds with high affinity to muscular (alpha-1/CHRNA1) and neuronal (alpha-7/CHRNA7) nicotinic acetylcholine receptor (nAChR) and inhibits acetylcholine from binding to the receptor, thereby impairing neuromuscular and neuronal transmission. In Naja haje haje (Egyptian cobra), this protein is Long neurotoxin 1.